Consider the following 347-residue polypeptide: Quinolinate synthase (347 aa).

Positions 47 and 68 each coordinate iminosuccinate. [4Fe-4S] cluster is bound at residue cysteine 113. Iminosuccinate is bound by residues 139 to 141 (YAN) and serine 156. Cysteine 200 is a [4Fe-4S] cluster binding site. Iminosuccinate contacts are provided by residues 226–228 (HPE) and threonine 243. A [4Fe-4S] cluster-binding site is contributed by cysteine 297.

This sequence belongs to the quinolinate synthase family. Type 1 subfamily. It depends on [4Fe-4S] cluster as a cofactor.

The protein localises to the cytoplasm. The catalysed reaction is iminosuccinate + dihydroxyacetone phosphate = quinolinate + phosphate + 2 H2O + H(+). Its pathway is cofactor biosynthesis; NAD(+) biosynthesis; quinolinate from iminoaspartate: step 1/1. In terms of biological role, catalyzes the condensation of iminoaspartate with dihydroxyacetone phosphate to form quinolinate. This Escherichia coli O7:K1 (strain IAI39 / ExPEC) protein is Quinolinate synthase.